The chain runs to 215 residues: Large ribosomal subunit protein uL4c (215 aa).

The disordered stretch occupies residues 51 to 87 (QKQGTVSTKTRSEVRGGGKKPWRQKGTGRARAGSSRS). A compositionally biased stretch (basic residues) spans 67 to 78 (GGKKPWRQKGTG).

It belongs to the universal ribosomal protein uL4 family. As to quaternary structure, part of the 50S ribosomal subunit.

The protein resides in the plastid. The protein localises to the chloroplast. Its function is as follows. Probably binds the 23S rRNA. The sequence is that of Large ribosomal subunit protein uL4c (rpl4) from Thalassiosira pseudonana (Marine diatom).